The sequence spans 229 residues: Ribonuclease 3 (229 aa).

The RNase III domain maps to Trp-4–Gly-133. Glu-46 is a Mg(2+) binding site. Asp-50 is an active-site residue. The Mg(2+) site is built by Asp-119 and Glu-122. The active site involves Glu-122. Positions Asp-159 to His-228 constitute a DRBM domain.

Belongs to the ribonuclease III family. In terms of assembly, homodimer. Requires Mg(2+) as cofactor.

It is found in the cytoplasm. It catalyses the reaction Endonucleolytic cleavage to 5'-phosphomonoester.. Digests double-stranded RNA. Involved in the processing of primary rRNA transcript to yield the immediate precursors to the large and small rRNAs (23S and 16S). Processes some mRNAs, and tRNAs when they are encoded in the rRNA operon. Processes pre-crRNA and tracrRNA of type II CRISPR loci if present in the organism. The sequence is that of Ribonuclease 3 from Listeria innocua serovar 6a (strain ATCC BAA-680 / CLIP 11262).